The chain runs to 248 residues: MNHIDFGFKKVDYTKKQGLVNSVFSNVADKYDLMNDLMSFGLHRLWKDEFIRRIPNLNSHILDVASGSGDIALKLAKKARDRGNNIALTLSDINEEMLKNAKKKTIDLNLFQNLKFTVASAEELPYPDNSFDYYTIAFGIRNVPDINKALKEAYRVLKPMGKFICLEFSKVKESYFKDFYKFYSFSIIPTIGQVITGNKEAYEYLVESIELFPSQDEFRIMIKEAGFEEVGYKNLSGGIVAIHSGYKI.

The S-adenosyl-L-methionine site is built by S68 and D92.

It belongs to the class I-like SAM-binding methyltransferase superfamily. MenG/UbiE family.

It carries out the reaction a 2-demethylmenaquinol + S-adenosyl-L-methionine = a menaquinol + S-adenosyl-L-homocysteine + H(+). It catalyses the reaction a 2-methoxy-6-(all-trans-polyprenyl)benzene-1,4-diol + S-adenosyl-L-methionine = a 5-methoxy-2-methyl-3-(all-trans-polyprenyl)benzene-1,4-diol + S-adenosyl-L-homocysteine + H(+). The protein operates within quinol/quinone metabolism; menaquinone biosynthesis; menaquinol from 1,4-dihydroxy-2-naphthoate: step 2/2. Its pathway is cofactor biosynthesis; ubiquinone biosynthesis. Methyltransferase required for the conversion of demethylmenaquinol (DMKH2) to menaquinol (MKH2) and the conversion of 2-polyprenyl-6-methoxy-1,4-benzoquinol (DDMQH2) to 2-polyprenyl-3-methyl-6-methoxy-1,4-benzoquinol (DMQH2). This Rickettsia akari (strain Hartford) protein is Ubiquinone/menaquinone biosynthesis C-methyltransferase UbiE.